The following is a 483-amino-acid chain: MLTLDTLNVMLAVSEEGMIEEMILALLSSPVLAVIFEKSPRLKKAITNDLPRWREALRTRLKDVHVPPELTEEVMCYQQSQLLSTPQFIVQLPQILALLYRLHSPYADQAQQLVDGNSRFTPALHTLFLQRWRLSLVVQATTFNQQLLEEEREQLLSEVQERMTLSGQLEPVLVDNDNAAGHLWDMSAGQLKRGDYQLIVKYGDFLAQQPELRQLAEQLGRSREAKSVPRKDAPMEAFRTLVREPATVPEQVEGLHQSDDILRLLPPELATLGISELEYEFYRRLVEKQLLTYRLQGEAWREKITERPVTHQDFEEQPRGPFIVCVDTSGSMGGFNEQCAKAFCLALMRIALADNRRCFIMLFSTEIVSYELSCPQGIEQAIRFLSQRFRGGTDLASCFRTIIERMQGREWFDADAVVISDFIAQRLPDDVVNKVKTLQKEHQHRFHAVAMSAHGKPGIMRIFDHIWRFDTGMRSRLLRRWRR.

Belongs to the ViaA family. Homodimer. Interacts with RavA.

It is found in the cytoplasm. Its function is as follows. Component of the RavA-ViaA chaperone complex, which may act on the membrane to optimize the function of some of the respiratory chains. ViaA stimulates the ATPase activity of RavA. The sequence is that of Regulatory protein ViaA from Escherichia fergusonii (strain ATCC 35469 / DSM 13698 / CCUG 18766 / IAM 14443 / JCM 21226 / LMG 7866 / NBRC 102419 / NCTC 12128 / CDC 0568-73).